The sequence spans 254 residues: Coproheme decarboxylase (254 aa).

Fe-coproporphyrin III contacts are provided by residues arginine 136, 150–154, histidine 177, glutamine 190, and serine 228; that span reads YPMDK. Tyrosine 150 is an active-site residue.

Belongs to the ChdC family. Type 1 subfamily. Requires Fe-coproporphyrin III as cofactor.

The enzyme catalyses Fe-coproporphyrin III + 2 H2O2 + 2 H(+) = heme b + 2 CO2 + 4 H2O. It carries out the reaction Fe-coproporphyrin III + H2O2 + H(+) = harderoheme III + CO2 + 2 H2O. The catalysed reaction is harderoheme III + H2O2 + H(+) = heme b + CO2 + 2 H2O. It participates in porphyrin-containing compound metabolism; protoheme biosynthesis. Functionally, involved in coproporphyrin-dependent heme b biosynthesis. Catalyzes the decarboxylation of Fe-coproporphyrin III (coproheme) to heme b (protoheme IX), the last step of the pathway. The reaction occurs in a stepwise manner with a three-propionate harderoheme intermediate. This Bacillus subtilis (strain 168) protein is Coproheme decarboxylase.